The sequence spans 491 residues: Ketol-acid reductoisomerase (NADP(+)) (491 aa).

Residues 15–208 (AQLGKCRFMG…GGHRAGVLES (194 aa)) form the KARI N-terminal Rossmann domain. Residues 45–48 (CGAQ), Arg-68, Arg-76, Ser-78, and 108–110 (DKQ) each bind NADP(+). His-132 is a catalytic residue. Gly-158 is a binding site for NADP(+). KARI C-terminal knotted domains lie at 209-344 (SFVA…TAPQ) and 345-484 (YEGK…MTDM). Positions 217, 221, 389, and 393 each coordinate Mg(2+). Ser-414 contacts substrate.

Belongs to the ketol-acid reductoisomerase family. It depends on Mg(2+) as a cofactor.

It catalyses the reaction (2R)-2,3-dihydroxy-3-methylbutanoate + NADP(+) = (2S)-2-acetolactate + NADPH + H(+). The catalysed reaction is (2R,3R)-2,3-dihydroxy-3-methylpentanoate + NADP(+) = (S)-2-ethyl-2-hydroxy-3-oxobutanoate + NADPH + H(+). It functions in the pathway amino-acid biosynthesis; L-isoleucine biosynthesis; L-isoleucine from 2-oxobutanoate: step 2/4. Its pathway is amino-acid biosynthesis; L-valine biosynthesis; L-valine from pyruvate: step 2/4. Functionally, involved in the biosynthesis of branched-chain amino acids (BCAA). Catalyzes an alkyl-migration followed by a ketol-acid reduction of (S)-2-acetolactate (S2AL) to yield (R)-2,3-dihydroxy-isovalerate. In the isomerase reaction, S2AL is rearranged via a Mg-dependent methyl migration to produce 3-hydroxy-3-methyl-2-ketobutyrate (HMKB). In the reductase reaction, this 2-ketoacid undergoes a metal-dependent reduction by NADPH to yield (R)-2,3-dihydroxy-isovalerate. This Shigella dysenteriae serotype 1 (strain Sd197) protein is Ketol-acid reductoisomerase (NADP(+)).